Reading from the N-terminus, the 190-residue chain is Signal peptidase complex subunit 3 (190 aa).

The Cytoplasmic segment spans residues 1-9 (MFNIVTRFQ). A helical; Signal-anchor for type II membrane protein membrane pass occupies residues 10–32 (YAANQALTSSIIIAGIVIVSSLL). Residues 33-190 (QLYSNNAWSL…EYVDKKKEQK (158 aa)) are Lumenal-facing.

Belongs to the SPCS3 family. Component of the signal peptidase complex (SPC) composed of a catalytic subunit SEC11 and three accessory subunits SPC1, SPC2 and SPC3. The complex induces a local thinning of the ER membrane which is used to measure the length of the signal peptide (SP) h-region of protein substrates. This ensures the selectivity of the complex towards h-regions shorter than 18-20 amino acids. SPC associates with the translocon complex.

It is found in the endoplasmic reticulum membrane. Its function is as follows. Essential component of the signal peptidase complex (SPC) which catalyzes the cleavage of N-terminal signal sequences from nascent proteins as they are translocated into the lumen of the endoplasmic reticulum. Essential for the SPC catalytic activity, possibly by stabilizing and positioning the active center of the complex close to the lumenal surface. Essential for viability. The chain is Signal peptidase complex subunit 3 (SPC3) from Debaryomyces hansenii (strain ATCC 36239 / CBS 767 / BCRC 21394 / JCM 1990 / NBRC 0083 / IGC 2968) (Yeast).